A 99-amino-acid polypeptide reads, in one-letter code: MMNMQSMMKQAQKLQKQMQVSQEEIANTTFVGKSAQDLVTVEFSGDRTLKSLNINPDVIDPEDPETLQDMVTDAVNDALSQIEKVTEQKLGKFTKGLPF.

It belongs to the YbaB/EbfC family. Homodimer.

The protein localises to the cytoplasm. It is found in the nucleoid. Functionally, binds to DNA and alters its conformation. May be involved in regulation of gene expression, nucleoid organization and DNA protection. This is Nucleoid-associated protein LACR_0106 from Lactococcus lactis subsp. cremoris (strain SK11).